Here is a 94-residue protein sequence, read N- to C-terminus: Large ribosomal subunit protein bL25 (94 aa).

Positions 1–20 (MFKFNAEVRQSQGKGASRRL) are disordered.

The protein belongs to the bacterial ribosomal protein bL25 family. As to quaternary structure, part of the 50S ribosomal subunit; part of the 5S rRNA/L5/L18/L25 subcomplex. Contacts the 5S rRNA. Binds to the 5S rRNA independently of L5 and L18.

This is one of the proteins that binds to the 5S RNA in the ribosome where it forms part of the central protuberance. The polypeptide is Large ribosomal subunit protein bL25 (Pasteurella multocida (strain Pm70)).